A 135-amino-acid chain; its full sequence is RxLR effector protein Avr10 (135 aa).

Residues Met1–Ala19 form the signal peptide. Residues Gly34–Lys43 show a composition bias toward polar residues. The segment at Gly34–Ala64 is disordered. The RxLR-dEER motif lies at Arg44–Arg63. The segment covering Leu46–Ala55 has biased composition (basic and acidic residues).

This sequence belongs to the RxLR effector family.

Its subcellular location is the secreted. The protein resides in the host nucleus. The protein localises to the host cytoplasm. In terms of biological role, secreted effector that acts as an elicitor of hypersensitive response (HR) specifically on plants carrying defense protein R10. Enhances P.infestans colonization of Nicotiana benthamiana leaves. The polypeptide is RxLR effector protein Avr10 (Phytophthora infestans (strain T30-4) (Potato late blight agent)).